The chain runs to 188 residues: Tuftelin (188 aa).

Positions 1–181 form a coiled coil; that stretch reads SLRKTVQDLL…DRMEHLIEKQ (181 aa).

Belongs to the tuftelin family. As to quaternary structure, interacts with TFIP11.

The protein localises to the secreted. Involved in the structural organization of the epidermis. Involved in the mineralization and structural organization of enamel. The protein is Tuftelin (TUFT1) of Sus scrofa (Pig).